An 84-amino-acid chain; its full sequence is uncharacterized protein (84 aa).

Residues 1-21 (MYYRRQGEPQEMYGNGNNSVS) are disordered. Residues 49 to 69 (YIIYAIVAAILLLLFWLLYKK) form a helical membrane-spanning segment.

It localises to the membrane. This is an uncharacterized protein from Invertebrate iridescent virus 6 (IIV-6).